We begin with the raw amino-acid sequence, 402 residues long: Speedy protein E21 (402 aa).

Residues 1–90 form a disordered region; that stretch reads MDRTETRFRK…EPEKELAPEP (90 aa). Polar residues predominate over residues 16–39; the sequence is GKITTSRQLHPQNEQSPQRSTSGY. The span at 76-90 shows a compositional bias: acidic residues; the sequence is DESEEEPEKELAPEP.

It belongs to the Speedy/Ringo family.

This Homo sapiens (Human) protein is Speedy protein E21.